The primary structure comprises 552 residues: Probable protein kinase UbiB (552 aa).

The Protein kinase domain maps to histidine 121–alanine 504. Residues leucine 127–valine 135 and lysine 149 each bind ATP. The Proton acceptor role is filled by aspartate 284. The next 2 helical transmembrane spans lie at valine 501–histidine 521 and isoleucine 530–tryptophan 550.

Belongs to the ABC1 family. UbiB subfamily.

The protein resides in the cell inner membrane. Its pathway is cofactor biosynthesis; ubiquinone biosynthesis [regulation]. Is probably a protein kinase regulator of UbiI activity which is involved in aerobic coenzyme Q (ubiquinone) biosynthesis. The polypeptide is Probable protein kinase UbiB (Xylella fastidiosa (strain M12)).